The following is a 102-amino-acid chain: Lipopolysaccharide assembly protein A (102 aa).

Residues 1–2 lie on the Cytoplasmic side of the membrane; the sequence is MK. Residues 3–23 form a helical membrane-spanning segment; it reads YLLIFLLVLAIFVISVTLGAQ. The Periplasmic portion of the chain corresponds to 24–43; it reads NDQQVTFNYLLAQGEYRIST. Residues 44–64 traverse the membrane as a helical segment; it reads LLAVLFAAGFAIGWLICGLFW. Positions 64-92 form a coiled coil; it reads WLRVRVSLARAERKIKRLENQLSPATDVA. Topologically, residues 65 to 102 are cytoplasmic; sequence LRVRVSLARAERKIKRLENQLSPATDVAVVPHSSAAKE.

Belongs to the LapA family.

It is found in the cell inner membrane. Involved in the assembly of lipopolysaccharide (LPS). The polypeptide is Lipopolysaccharide assembly protein A (Escherichia coli (strain K12)).